Here is a 738-residue protein sequence, read N- to C-terminus: MDISINDCTDISQIKQRFHDLQVESQRTDEKLERLLSDAQPTEKFNSLIKNMAERLVLFVGQIEELKDAFCNTTIVSEEVIERIKSVDREQNRIKECLLFVRQVRDFKECLQDLNRAMHHQQWEKAADLVHRASSTSPAIIEGKFAHAVVPTAEQPLAPMDTLKEITESLHTLFWREFHKAARNQDQKEITRYFKLFPLIGKEKEGLEAYWHFFGGIIASKARATLDEPPTHALFFAQAFTGLVEHVASIIRAHTPLVQKYYKAKNTITVIEKLQGDCDRQGSIIVNTMFDVRRIDNLVSSIASYKYILLHAKLKNRAFVSDQKELERVSLQTLHPILNEMSAIVSKWNISKIFISRLVLRLSQSDGTSNDPSVQDNLICASIFNSSKMELLLKKQLLPSLLQLETYYFRRSIETSLELEEYYTKVSPWMSSIVDDVMYVTKQVFQRAFFTVSSLFFTRFVNESLIPILRNDYYVYLSHNLLTVCNIIKAQFQRLKNANSIPAKQVENYITLVNSASLSKQYLKSIVDGVSSRLEEVFAFAKDQKLVKKSIDNFLQLTVNFENLCKTSFNMYFPIFLLPRIEQCIDDSFDGINYVLSYEDYTKETEHERLVVTRLRSVWDRVLLLEQFTPENQLSLRSMACEKAASYIENLILYKIQWNDYGAMALENDISSLITIFSNDQANLRHSFERLQEILILLVWESDSTAPEQLINDLNLQLLSIDIVSAIMEKKANVQGED.

This sequence belongs to the COG4 family. In terms of assembly, component of the conserved oligomeric Golgi complex.

The protein resides in the golgi apparatus membrane. Its function is as follows. Component of the peripheral membrane COG complex that is involved in intra-Golgi protein trafficking. COG is located at the cis-Golgi, and regulates tethering of retrograde intra-Golgi vesicles and possibly a number of other membrane trafficking events. This chain is Conserved oligomeric Golgi complex subunit 4 (cog4), found in Schizosaccharomyces pombe (strain 972 / ATCC 24843) (Fission yeast).